Consider the following 515-residue polypeptide: Folate synthesis bifunctional protein, mitochondrial (515 aa).

Residues 1-28 (MSILKCLGVRGNQLCAARNYLKVLGFSS) constitute a mitochondrion transit peptide. Residues 47-172 (VIALGSNVGD…PFVMAPLMDL (126 aa)) are HPPK. Residues 230 to 498 (TLVMGILNLT…NVKDNLDAVK (269 aa)) form the Pterin-binding domain. Residues 232-515 (VMGILNLTPD…QKSSPIKFKQ (284 aa)) are DHPS. Asparagine 237 lines the Mg(2+) pocket. Residues threonine 277, aspartate 314, asparagine 333, aspartate 406, lysine 451, and 486 to 488 (RVH) each bind (7,8-dihydropterin-6-yl)methyl diphosphate.

The protein in the N-terminal section; belongs to the HPPK family. This sequence in the C-terminal section; belongs to the DHPS family. As to quaternary structure, homomultimer. Mg(2+) is required as a cofactor.

It is found in the mitochondrion. The enzyme catalyses 6-hydroxymethyl-7,8-dihydropterin + ATP = (7,8-dihydropterin-6-yl)methyl diphosphate + AMP + H(+). The catalysed reaction is (7,8-dihydropterin-6-yl)methyl diphosphate + 4-aminobenzoate = 7,8-dihydropteroate + diphosphate. It participates in cofactor biosynthesis; tetrahydrofolate biosynthesis; 2-amino-4-hydroxy-6-hydroxymethyl-7,8-dihydropteridine diphosphate from 7,8-dihydroneopterin triphosphate: step 4/4. The protein operates within cofactor biosynthesis; tetrahydrofolate biosynthesis; 7,8-dihydrofolate from 2-amino-4-hydroxy-6-hydroxymethyl-7,8-dihydropteridine diphosphate and 4-aminobenzoate: step 1/2. In terms of biological role, catalyzes the first two consecutive steps of tetrahydrofolate biosynthesis. This chain is Folate synthesis bifunctional protein, mitochondrial, found in Pisum sativum (Garden pea).